A 543-amino-acid polypeptide reads, in one-letter code: Tapetal oleosin GRP-17 (543 aa).

The polar stretch occupies residues 1–67 (MSEELSQKPS…FLMPLLEVIK (67 aa)). The next 3 membrane-spanning stretches (helical) occupy residues 68–88 (IIIASVASVIFVGFACVTLAG), 98–118 (PVFIIFSPVLVPATIATVVLA), and 119–139 (TGFTAGGSFGATALGLIMWLV). Positions 68 to 162 (IIIASVASVI…PAGLPPNSGA (95 aa)) are hydrophobic. 2 disordered regions span residues 148–169 (KDNPPPAGLPPNSGAGAGGAQS) and 195–543 (GGKK…HMAE). Positions 201–212 (SGGGKSKFGGKG) are enriched in gly residues. Repeat copies occupy residues 220-223 (GMSS), 227-230 (GMSG), and 234-237 (GMSG). The span at 220–229 (GMSSGDEGMS) shows a compositional bias: low complexity. A 29 X 4 AA approximate tandem repeats of G-M-S-G region spans residues 220 to 514 (GMSSGDEGMS…GGMSESGMSG (295 aa)). The span at 230–240 (GSEGGMSGGEG) shows a compositional bias: gly residues. The span at 244-256 (KSGKGKLKAKLEK) shows a compositional bias: basic residues. Repeat copies occupy residues 259–262 (GMSG), 269–272 (GMSG), 276–279 (GMSG), 301–304 (GMSG), 305–308 (GMSG), 312–315 (GMSG), 319–322 (GMSS), 344–347 (SMSG), 348–351 (GMSG), 355–358 (GMSG), 362–365 (GMSG), 387–390 (CMSG), 391–394 (GMSG), 398–401 (GMSR), 405–408 (GISG), 410–413 (GMSG), 414–417 (GSGS), 438–441 (GMSG), 445–448 (GMSG), 458–461 (GSMS), 464–467 (GMSG), 468–471 (GSGS), 492–495 (GMSG), 499–502 (GMSG), 506–509 (GMSE), and 511–514 (GMSG). The segment covering 272–283 (GSEGGMSGGGGS) has biased composition (gly residues). Residues 285 to 301 (SKSKKSKLKAKLGKKKG) show a composition bias toward basic residues. The segment covering 315 to 326 (GSEGGMSSGGGS) has biased composition (gly residues). Basic residues predominate over residues 328-344 (SKSKKSKLKAKLGKKKS). Residues 345–357 (MSGGMSGSEEGMS) are compositionally biased toward low complexity. The segment covering 358–370 (GSEGGMSGGGGGK) has biased composition (gly residues). A compositionally biased stretch (basic residues) spans 371–387 (SKSRKSKLKANLGKKKC). 2 stretches are compositionally biased toward gly residues: residues 405–416 (GISGGGMSGGSG) and 440–470 (SGSGGGMSGSEGGVSGSEGSMSGGGMSGGSG). Residues 471–492 (SKHKIGGGKHGGLRGKFGKKRG) show a composition bias toward basic residues. Gly residues predominate over residues 495–505 (GSEGGMSGSEG). Residues 518-531 (GKHKIGGGKHKFGG) show a composition bias toward basic residues. A compositionally biased stretch (gly residues) spans 532-543 (GKHGGGGGHMAE).

The protein belongs to the oleosin family. Post-translationally, proteolytically cleaved following anther tapetal breakdown. In terms of tissue distribution, flower specific, especially in anther tapetum, pollen (at protein level) and flowers florets.

Its subcellular location is the secreted. The protein localises to the extracellular space. It is found in the extracellular matrix. The protein resides in the pollen coat. It localises to the lipid droplet. Its subcellular location is the membrane. In terms of biological role, lipid-binding oleosin pollen coat protein required to mediate pollen recognition by stigma cells and subsequent pollen hydration. Involved in anther tapetum development, especially for the physiology of tapetosomes. Also implicated in the formation of pollen coat. The polypeptide is Tapetal oleosin GRP-17 (Arabidopsis thaliana (Mouse-ear cress)).